Consider the following 414-residue polypeptide: Methylthioribose-1-phosphate isomerase (414 aa).

Residues 205 to 215 (SQSQGSENPPS) show a composition bias toward polar residues. Residues 205 to 224 (SQSQGSENPPSKKQKKDAAP) form a disordered region. The active-site Proton donor is the Asp-283.

It belongs to the eIF-2B alpha/beta/delta subunits family. MtnA subfamily.

It localises to the cytoplasm. The protein localises to the nucleus. It catalyses the reaction 5-(methylsulfanyl)-alpha-D-ribose 1-phosphate = 5-(methylsulfanyl)-D-ribulose 1-phosphate. It participates in amino-acid biosynthesis; L-methionine biosynthesis via salvage pathway; L-methionine from S-methyl-5-thio-alpha-D-ribose 1-phosphate: step 1/6. In terms of biological role, catalyzes the interconversion of methylthioribose-1-phosphate (MTR-1-P) into methylthioribulose-1-phosphate (MTRu-1-P). The sequence is that of Methylthioribose-1-phosphate isomerase from Zygosaccharomyces rouxii (strain ATCC 2623 / CBS 732 / NBRC 1130 / NCYC 568 / NRRL Y-229).